The primary structure comprises 240 residues: Phosphoenolpyruvate guanylyltransferase (240 aa).

Phosphoenolpyruvate contacts are provided by T161, G178, and S181.

The protein belongs to the CofC family.

The enzyme catalyses phosphoenolpyruvate + GTP + H(+) = enolpyruvoyl-2-diphospho-5'-guanosine + diphosphate. It participates in cofactor biosynthesis; coenzyme F420 biosynthesis. Guanylyltransferase that catalyzes the activation of phosphoenolpyruvate (PEP) as enolpyruvoyl-2-diphospho-5'-guanosine, via the condensation of PEP with GTP. It is involved in the biosynthesis of coenzyme F420, a hydride carrier cofactor. This chain is Phosphoenolpyruvate guanylyltransferase, found in Rhodococcus opacus (strain B4).